The chain runs to 559 residues: Small ribosomal subunit protein uS3m (559 aa).

Residues 113–134 form a disordered region; the sequence is EGTEEERNEVRGRGAGKRVESI. The segment covering 120–134 has biased composition (basic and acidic residues); it reads NEVRGRGAGKRVESI.

The protein belongs to the universal ribosomal protein uS3 family.

The protein resides in the mitochondrion. In Zea mays (Maize), this protein is Small ribosomal subunit protein uS3m (RPS3).